The chain runs to 284 residues: Bifunctional protein FolD (284 aa).

Residues 165-167 (GRS) and S190 contribute to the NADP(+) site.

It belongs to the tetrahydrofolate dehydrogenase/cyclohydrolase family. As to quaternary structure, homodimer.

It catalyses the reaction (6R)-5,10-methylene-5,6,7,8-tetrahydrofolate + NADP(+) = (6R)-5,10-methenyltetrahydrofolate + NADPH. The enzyme catalyses (6R)-5,10-methenyltetrahydrofolate + H2O = (6R)-10-formyltetrahydrofolate + H(+). It functions in the pathway one-carbon metabolism; tetrahydrofolate interconversion. Catalyzes the oxidation of 5,10-methylenetetrahydrofolate to 5,10-methenyltetrahydrofolate and then the hydrolysis of 5,10-methenyltetrahydrofolate to 10-formyltetrahydrofolate. This is Bifunctional protein FolD from Streptococcus equi subsp. zooepidemicus (strain MGCS10565).